A 502-amino-acid chain; its full sequence is Actin-binding protein WASF3 (502 aa).

A coiled-coil region spans residues 57-93; that stretch reads NEANNFYIRANSLQDRIDRLAVKVTQLDSTVEEVSLQ. At Tyr151 the chain carries Phosphotyrosine; by ABL1. Residues 162-206 adopt a coiled-coil conformation; it reads KEKMLQDTEDKRKEKRRQKEQKRIDGTTREVKKVRKARNRRQEWN. Disordered stretches follow at residues 169-210 and 223-443; these read TEDK…MMAY and SVYH…ARSD. The span at 182 to 192 shows a compositional bias: basic and acidic residues; the sequence is QKRIDGTTREV. Over residues 223 to 237 the composition is skewed to polar residues; sequence SVYHGASSEGSLSPD. Tyr248 carries the post-translational modification Phosphotyrosine; by ABL1. The segment covering 302–312 has biased composition (pro residues); sequence QQPPPPPPPQA. Tyr337 bears the Phosphotyrosine; by ABL1 mark. 2 stretches are compositionally biased toward pro residues: residues 341–352 and 394–410; these read SGPPPPPPPPVI and APPP…PPGP. A compositionally biased stretch (low complexity) spans 411-423; the sequence is GSSLSSSPMHGPP. One can recognise a WH2 domain in the interval 440–457; the sequence is ARSDLLAAIRMGIQLKKV. At Tyr486 the chain carries Phosphotyrosine; by ABL1.

It belongs to the SCAR/WAVE family. Binds actin and the Arp2/3 complex. Phosphorylation by ABL1 promotes lamellipodia formation and cell migration. Expressed in ovary and brain.

Its subcellular location is the cytoplasm. It localises to the cytoskeleton. Functionally, downstream effector molecules involved in the transmission of signals from tyrosine kinase receptors and small GTPases to the actin cytoskeleton. Plays a role in the regulation of cell morphology and cytoskeletal organization. Required in the control of cell shape. The chain is Actin-binding protein WASF3 (WASF3) from Homo sapiens (Human).